Consider the following 301-residue polypeptide: Acetylglutamate kinase (301 aa).

Substrate contacts are provided by residues 68 to 69 (GG), Arg90, and Asn197.

The protein belongs to the acetylglutamate kinase family. ArgB subfamily.

Its subcellular location is the cytoplasm. It catalyses the reaction N-acetyl-L-glutamate + ATP = N-acetyl-L-glutamyl 5-phosphate + ADP. Its pathway is amino-acid biosynthesis; L-arginine biosynthesis; N(2)-acetyl-L-ornithine from L-glutamate: step 2/4. Functionally, catalyzes the ATP-dependent phosphorylation of N-acetyl-L-glutamate. This Nitrosococcus oceani (strain ATCC 19707 / BCRC 17464 / JCM 30415 / NCIMB 11848 / C-107) protein is Acetylglutamate kinase.